The sequence spans 955 residues: Glycine dehydrogenase (decarboxylating) (955 aa).

At Lys705 the chain carries N6-(pyridoxal phosphate)lysine.

Belongs to the GcvP family. In terms of assembly, the glycine cleavage system is composed of four proteins: P, T, L and H. Pyridoxal 5'-phosphate is required as a cofactor.

It carries out the reaction N(6)-[(R)-lipoyl]-L-lysyl-[glycine-cleavage complex H protein] + glycine + H(+) = N(6)-[(R)-S(8)-aminomethyldihydrolipoyl]-L-lysyl-[glycine-cleavage complex H protein] + CO2. In terms of biological role, the glycine cleavage system catalyzes the degradation of glycine. The P protein binds the alpha-amino group of glycine through its pyridoxal phosphate cofactor; CO(2) is released and the remaining methylamine moiety is then transferred to the lipoamide cofactor of the H protein. The sequence is that of Glycine dehydrogenase (decarboxylating) from Aliivibrio salmonicida (strain LFI1238) (Vibrio salmonicida (strain LFI1238)).